The sequence spans 251 residues: uncharacterized protein (251 aa).

3 N-linked (GlcNAc...) asparagine; by host glycosylation sites follow: N149, N152, and N207. Residues 226 to 246 traverse the membrane as a helical segment; sequence YLIFIIIIIIFIILILLWIKY.

The protein belongs to the glycosyltransferase 32 family.

Its subcellular location is the membrane. This is an uncharacterized protein from Acanthamoeba polyphaga (Amoeba).